Here is a 378-residue protein sequence, read N- to C-terminus: 3-dehydroquinate synthase (378 aa).

NAD(+) contacts are provided by residues 115-119 (GVVGD), 139-140 (TS), K152, and K161. The Zn(2+) site is built by E194, H256, and H275.

The protein belongs to the sugar phosphate cyclases superfamily. Dehydroquinate synthase family. Co(2+) is required as a cofactor. It depends on Zn(2+) as a cofactor. Requires NAD(+) as cofactor.

Its subcellular location is the cytoplasm. The catalysed reaction is 7-phospho-2-dehydro-3-deoxy-D-arabino-heptonate = 3-dehydroquinate + phosphate. Its pathway is metabolic intermediate biosynthesis; chorismate biosynthesis; chorismate from D-erythrose 4-phosphate and phosphoenolpyruvate: step 2/7. Catalyzes the conversion of 3-deoxy-D-arabino-heptulosonate 7-phosphate (DAHP) to dehydroquinate (DHQ). In Brucella suis (strain ATCC 23445 / NCTC 10510), this protein is 3-dehydroquinate synthase.